A 318-amino-acid polypeptide reads, in one-letter code: Pyrimidine-specific ribonucleoside hydrolase RihA (318 aa).

Residue H240 is part of the active site.

This sequence belongs to the IUNH family. RihA subfamily.

Functionally, hydrolyzes cytidine or uridine to ribose and cytosine or uracil, respectively. In Shewanella sp. (strain MR-7), this protein is Pyrimidine-specific ribonucleoside hydrolase RihA.